The following is a 609-amino-acid chain: PTS system beta-glucoside-specific EIIBCA component (609 aa).

Residues 1–86 (MDYDKLSKDI…VRHSNLSDEK (86 aa)) enclose the PTS EIIB type-1 domain. Catalysis depends on cysteine 26, which acts as the Phosphocysteine intermediate; for EIIB activity. Residues 103 to 459 (DVISGVFTPI…GSQQPAVHEG (357 aa)) enclose the PTS EIIC type-1 domain. 10 helical membrane passes run 112–132 (ILPA…AVTF), 141–161 (VHVI…LLLA), 174–194 (VAAA…LGAG), 202–222 (LPVT…SIWI), 246–266 (FTLL…GAIL), 281–301 (AGLV…MTGM), 321–341 (LLPA…AVFL), 351–371 (LALT…MYGV), 379–399 (FAAA…TGVA), and 412–432 (IPVF…IAFA). In terms of domain architecture, PTS EIIA type-1 spans 480–584 (DGVFSAGVMG…DVITPVIVTN (105 aa)). Histidine 532 acts as the Tele-phosphohistidine intermediate; for EIIA activity in catalysis.

Its subcellular location is the cell membrane. Its function is as follows. The phosphoenolpyruvate-dependent sugar phosphotransferase system (sugar PTS), a major carbohydrate active -transport system, catalyzes the phosphorylation of incoming sugar substrates concomitantly with their translocation across the cell membrane. This system is involved in beta-glucoside transport. The chain is PTS system beta-glucoside-specific EIIBCA component (bglP) from Bacillus subtilis (strain 168).